We begin with the raw amino-acid sequence, 616 residues long: Dihydroxy-acid dehydratase (616 aa).

D81 serves as a coordination point for Mg(2+). C122 provides a ligand contact to [2Fe-2S] cluster. Positions 123 and 124 each coordinate Mg(2+). Position 124 is an N6-carboxylysine (K124). C195 provides a ligand contact to [2Fe-2S] cluster. E491 lines the Mg(2+) pocket. The active-site Proton acceptor is S517.

This sequence belongs to the IlvD/Edd family. As to quaternary structure, homodimer. It depends on [2Fe-2S] cluster as a cofactor. Requires Mg(2+) as cofactor.

It catalyses the reaction (2R)-2,3-dihydroxy-3-methylbutanoate = 3-methyl-2-oxobutanoate + H2O. It carries out the reaction (2R,3R)-2,3-dihydroxy-3-methylpentanoate = (S)-3-methyl-2-oxopentanoate + H2O. Its pathway is amino-acid biosynthesis; L-isoleucine biosynthesis; L-isoleucine from 2-oxobutanoate: step 3/4. It functions in the pathway amino-acid biosynthesis; L-valine biosynthesis; L-valine from pyruvate: step 3/4. In terms of biological role, functions in the biosynthesis of branched-chain amino acids. Catalyzes the dehydration of (2R,3R)-2,3-dihydroxy-3-methylpentanoate (2,3-dihydroxy-3-methylvalerate) into 2-oxo-3-methylpentanoate (2-oxo-3-methylvalerate) and of (2R)-2,3-dihydroxy-3-methylbutanoate (2,3-dihydroxyisovalerate) into 2-oxo-3-methylbutanoate (2-oxoisovalerate), the penultimate precursor to L-isoleucine and L-valine, respectively. This Salmonella newport (strain SL254) protein is Dihydroxy-acid dehydratase.